The sequence spans 98 residues: NADH-ubiquinone oxidoreductase chain 4L (98 aa).

Helical transmembrane passes span 1–21, 26–46, and 59–79; these read MTPT…GLAF, LLSA…ALSL, and APML…ALLV.

The protein belongs to the complex I subunit 4L family.

It is found in the mitochondrion membrane. The enzyme catalyses a ubiquinone + NADH + 5 H(+)(in) = a ubiquinol + NAD(+) + 4 H(+)(out). Core subunit of the mitochondrial membrane respiratory chain NADH dehydrogenase (Complex I) which catalyzes electron transfer from NADH through the respiratory chain, using ubiquinone as an electron acceptor. Part of the enzyme membrane arm which is embedded in the lipid bilayer and involved in proton translocation. This chain is NADH-ubiquinone oxidoreductase chain 4L (MT-ND4L), found in Gadus morhua (Atlantic cod).